Consider the following 204-residue polypeptide: Guanylate kinase (204 aa).

The 179-residue stretch at 4-182 folds into the Guanylate kinase-like domain; sequence GLLYVISAPS…ALNQLRAIVQ (179 aa). Residue 11 to 18 coordinates ATP; that stretch reads APSGAGKT.

Belongs to the guanylate kinase family.

Its subcellular location is the cytoplasm. It catalyses the reaction GMP + ATP = GDP + ADP. Its function is as follows. Essential for recycling GMP and indirectly, cGMP. This is Guanylate kinase from Methylococcus capsulatus (strain ATCC 33009 / NCIMB 11132 / Bath).